Reading from the N-terminus, the 662-residue chain is DNA ligase (662 aa).

NAD(+) is bound by residues 31–35 (DKDYD) and 79–80 (SL). Lys-121 functions as the N6-AMP-lysine intermediate in the catalytic mechanism. Residues Arg-143, Glu-177, and Lys-313 each coordinate NAD(+). Zn(2+)-binding residues include Cys-406, Cys-409, Cys-422, and Cys-428. Residues 586 to 662 (VLESPFMGKT…LSEEEFENMI (77 aa)) form the BRCT domain.

The protein belongs to the NAD-dependent DNA ligase family. LigA subfamily. Mg(2+) serves as cofactor. The cofactor is Mn(2+).

It catalyses the reaction NAD(+) + (deoxyribonucleotide)n-3'-hydroxyl + 5'-phospho-(deoxyribonucleotide)m = (deoxyribonucleotide)n+m + AMP + beta-nicotinamide D-nucleotide.. In terms of biological role, DNA ligase that catalyzes the formation of phosphodiester linkages between 5'-phosphoryl and 3'-hydroxyl groups in double-stranded DNA using NAD as a coenzyme and as the energy source for the reaction. It is essential for DNA replication and repair of damaged DNA. The chain is DNA ligase from Clostridium perfringens (strain SM101 / Type A).